The primary structure comprises 380 residues: Cytochrome b (380 aa).

4 consecutive transmembrane segments (helical) span residues 34-54 (FGSLLGICLTTQILTGLLLAA), 78-99 (WLIRNLHANGASFFFICIYMHV), 114-134 (WNTGVILLLTLMATAFVGYVL), and 179-199 (FFTLHFLLPFMIMGLTLIHLT). Residues histidine 84 and histidine 98 each contribute to the heme b site. Positions 183 and 197 each coordinate heme b. A ubiquinone is bound at residue histidine 202. Transmembrane regions (helical) follow at residues 227–247 (LKDILGFMLMFLPLMTLALFS), 289–309 (LGGVLALAASMLVLFLAPLLH), 321–341 (LSQLLFWTLTANLLILTWVGS), and 348–368 (FMIIGQLASLTYFTILLILFP).

Belongs to the cytochrome b family. The cytochrome bc1 complex contains 11 subunits: 3 respiratory subunits (MT-CYB, CYC1 and UQCRFS1), 2 core proteins (UQCRC1 and UQCRC2) and 6 low-molecular weight proteins (UQCRH/QCR6, UQCRB/QCR7, UQCRQ/QCR8, UQCR10/QCR9, UQCR11/QCR10 and a cleavage product of UQCRFS1). This cytochrome bc1 complex then forms a dimer. Heme b serves as cofactor.

It is found in the mitochondrion inner membrane. Functionally, component of the ubiquinol-cytochrome c reductase complex (complex III or cytochrome b-c1 complex) that is part of the mitochondrial respiratory chain. The b-c1 complex mediates electron transfer from ubiquinol to cytochrome c. Contributes to the generation of a proton gradient across the mitochondrial membrane that is then used for ATP synthesis. The polypeptide is Cytochrome b (MT-CYB) (Balearica pavonina (Black crowned-crane)).